Here is a 244-residue protein sequence, read N- to C-terminus: Ureidoacrylate amidohydrolase RutB (244 aa).

The active-site Proton acceptor is Asp-38. Lys-147 is an active-site residue. Residue Cys-180 is the Nucleophile of the active site.

This sequence belongs to the isochorismatase family. RutB subfamily.

It carries out the reaction (Z)-3-ureidoacrylate + H2O + H(+) = (Z)-3-aminoacrylate + NH4(+) + CO2. It catalyses the reaction (Z)-3-ureidoacrylate + H2O = (Z)-3-aminoacrylate + carbamate + H(+). The catalysed reaction is (Z)-2-methylureidoacrylate + H2O + H(+) = (Z)-2-methylaminoacrylate + NH4(+) + CO2. Its function is as follows. Hydrolyzes ureidoacrylate to form aminoacrylate and carbamate. The carbamate hydrolyzes spontaneously, thereby releasing one of the nitrogen atoms of the pyrimidine ring as ammonia and one of its carbon atoms as CO2. The chain is Ureidoacrylate amidohydrolase RutB from Shigella sonnei (strain Ss046).